A 522-amino-acid polypeptide reads, in one-letter code: Occludin (522 aa).

Residues 1 to 20 are disordered; sequence MSSRPLESPPPYRPDEFKPN. Over 1–66 the chain is Cytoplasmic; sequence MSSRPLESPP…KWTSPPGVIR (66 aa). Positions 60 to 269 constitute an MARVEL domain; that stretch reads SPPGVIRILS…IIFFAVKTRR (210 aa). A helical transmembrane segment spans residues 67–89; it reads ILSMLIIVMCIAIFACVASTLAW. Over 90 to 135 the chain is Extracellular; it reads DRGYGTSLLGGSVGYPYGGSGFGSYGSGYGYGYGYGYGYGGYTDPR. The chain crosses the membrane as a helical span at residues 136–160; the sequence is AAKGFMLAMAAFCFIAALVIFVTSV. At 161-170 the chain is on the cytoplasmic side; that stretch reads IRSEMSRTRR. Residues 171–195 traverse the membrane as a helical segment; it reads YYLSVIIVSAILGIMVFIATIVYIM. The Extracellular segment spans residues 196-243; it reads GVNPTAQSSGSLYGSQIYALCNQFYTPAATGLYVDQYLYHYCVVDPQE. Cysteine 216 and cysteine 237 are disulfide-bonded. The chain crosses the membrane as a helical span at residues 244-265; the sequence is AIAIVLGFMIIVAFALIIFFAV. Residues 266–522 lie on the Cytoplasmic side of the membrane; the sequence is KTRRKMDRYD…MVGDYDRQKT (257 aa). Serine 302 is modified (phosphoserine). Threonine 305 is subject to Phosphothreonine. A phosphoserine mark is found at serine 313, serine 321, and serine 340. Residues 360-407 form a disordered region; the sequence is VDDFRQPRYSSGGNFETPSKRAPAKGRAGRSKRTEQDHYETDYTTGGE. Residues 367 to 376 show a composition bias toward polar residues; sequence RYSSGGNFET. Position 368 is a phosphotyrosine (tyrosine 368). 2 positions are modified to phosphoserine: serine 369 and serine 370. Residues 381–390 show a composition bias toward basic residues; sequence APAKGRAGRS. The segment covering 391–400 has biased composition (basic and acidic residues); the sequence is KRTEQDHYET. Phosphotyrosine is present on residues tyrosine 398 and tyrosine 402. Phosphothreonine; by PKC/PRKCH is present on residues threonine 403 and threonine 404. Serine 408 carries the phosphoserine modification. The region spanning 414–522 is the OCEL domain; sequence EDWIREYPPI…MVGDYDRQKT (109 aa). Positions 426–489 form a coiled coil; sequence DQQRQLYKRN…EYNRLKQVKG (64 aa). Serine 490 carries the post-translational modification Phosphoserine.

Belongs to the ELL/occludin family. In terms of assembly, interacts with TJP1/ZO1. Interacts with VAPA. Interacts with CLDN1, CLDN6, CLDN9, CLDN11, CLDN12 and CLDN17. Interacts with PLSCR1. Interacts with LSR, ILDR1 and ILDR2. Interacts with TJP2/ZO2. In terms of processing, dephosphorylated by PTPRJ. The tyrosine phosphorylation on Tyr-398 and Tyr-402 reduces its ability to interact with TJP1. Phosphorylation at Ser-490 also attenuates the interaction with TJP1. Post-translationally, (Microbial infection) Cleaved by S.pyogenes SpeB protease; leading to its degradation. Degradation by SpeB promotes bacterial translocation across the host epithelial barrier. Localized at tight junctions of both epithelial and endothelial cells. Highly expressed in kidney. Not detected in testis.

Its subcellular location is the cell membrane. It is found in the cell junction. The protein localises to the tight junction. Functionally, may play a role in the formation and regulation of the tight junction (TJ) paracellular permeability barrier. It is able to induce adhesion when expressed in cells lacking tight junctions. (Microbial infection) Acts as a coreceptor for hepatitis C virus (HCV) in hepatocytes. The chain is Occludin (OCLN) from Homo sapiens (Human).